A 204-amino-acid polypeptide reads, in one-letter code: Leucyl/phenylalanyl-tRNA--protein transferase (204 aa).

The protein belongs to the L/F-transferase family.

The protein localises to the cytoplasm. The catalysed reaction is N-terminal L-lysyl-[protein] + L-leucyl-tRNA(Leu) = N-terminal L-leucyl-L-lysyl-[protein] + tRNA(Leu) + H(+). It carries out the reaction N-terminal L-arginyl-[protein] + L-leucyl-tRNA(Leu) = N-terminal L-leucyl-L-arginyl-[protein] + tRNA(Leu) + H(+). It catalyses the reaction L-phenylalanyl-tRNA(Phe) + an N-terminal L-alpha-aminoacyl-[protein] = an N-terminal L-phenylalanyl-L-alpha-aminoacyl-[protein] + tRNA(Phe). Functions in the N-end rule pathway of protein degradation where it conjugates Leu, Phe and, less efficiently, Met from aminoacyl-tRNAs to the N-termini of proteins containing an N-terminal arginine or lysine. The polypeptide is Leucyl/phenylalanyl-tRNA--protein transferase (Rhizobium etli (strain ATCC 51251 / DSM 11541 / JCM 21823 / NBRC 15573 / CFN 42)).